Here is a 527-residue protein sequence, read N- to C-terminus: MAAETASGSNRSISNSPLIENSDSNQILVPEKKSWKNFFSYLGPGFLVSIAYIDPGNFETDLQSGAQYKYELLWIILVASCAALVIQSLAANLGVVTGKHLAEHCRAEYSKVPNFMLWVVAEIAVVACDIPEVIGTAFALNMLFNIPVWIGVLLTGLSTLILLALQQYGIRKLEFLIAFLVFTIALCFFVELHYSKPDPKEVLYGLFVPQLKGNGATGLAISLLGAMVMPHNLFLHSALVLSRKIPRSVTGIKEACRYYLIESGLALMVAFLINVSVISVSGAVCNASDLSPEDRASCQDLDLNKASFLLRNVVGKWSSKLFAIALLASGQSSTITGTYAGQYVMQGFLDLRLEPWLRNFLTRCLAIIPSLIVALIGGSAGAGKLIIIASMILSFELPFALVPLLKFTSSKTKMGSHANSLVISSVTWIIGGLIMGINIYYLVSSFIKLLLHSHMNLVAIVFLGVLGFSGIATYLAAISYLVLRKNRESSSTHFLDFSNSQTEETLPREDIANMQLPNRVAVIGDLN.

A run of 12 helical transmembrane segments spans residues 38 to 58 (FFSY…PGNF), 71 to 91 (ELLW…SLAA), 115 to 135 (FMLW…EVIG), 143 to 163 (LFNI…LILL), 173 to 193 (LEFL…VELH), 221 to 241 (ISLL…ALVL), 264 to 284 (GLAL…SGAV), 321 to 341 (LFAI…TYAG), 364 to 384 (CLAI…GAGK), 385 to 405 (LIII…VPLL), 427 to 447 (TWII…SSFI), and 458 to 478 (VAIV…LAAI).

It belongs to the NRAMP (TC 2.A.55) family. As to expression, expressed in the vascular bundles of shoots, cotyledons, young leaves, sepals and petals, at the top of the flower stem and in the style. Expressed in the peduncle of developing siliques as well as in the septum and the funiculi.

It is found in the endomembrane system. In terms of biological role, probable intracellular cadmium (Cd) transporter that participates in the distribution or availability of Cd within the cell. The polypeptide is Metal transporter Nramp6 (NRAMP6) (Arabidopsis thaliana (Mouse-ear cress)).